The primary structure comprises 723 residues: tRNA (guanine(27)-N(2))-dimethyltransferase (723 aa).

Positions Met1–Leu10 are enriched in acidic residues. Residues Met1–Glu72 are disordered. The residue at position 23 (Thr23) is a Phosphothreonine. Positions Pro32 to Pro44 are enriched in low complexity. Residues Asp45–Ala59 are compositionally biased toward pro residues. Ser61 is subject to Phosphoserine. The Nucleolar localization signal motif lies at His128–Arg132. A C2H2-type zinc finger spans residues Tyr177–His199. The Trm1 methyltransferase domain occupies Glu220–Leu679. Positions 253, 300, 348, and 349 each coordinate S-adenosyl-L-methionine. Residues Cys479, Cys482, Cys504, and Cys506 each coordinate Zn(2+). Lys576 is covalently cross-linked (Glycyl lysine isopeptide (Lys-Gly) (interchain with G-Cter in SUMO2)). Ser603 carries the phosphoserine modification.

The protein belongs to the class I-like SAM-binding methyltransferase superfamily. Trm1 family.

It is found in the nucleus. The protein localises to the nucleolus. It carries out the reaction guanosine(27) in tRNA(Tyr) + 2 S-adenosyl-L-methionine = N(2)-dimethylguanosine(27) in tRNA(Tyr) + 2 S-adenosyl-L-homocysteine + 2 H(+). Specifically dimethylates a single guanine residue at position 27 of tRNA(Tyr) using S-adenosyl-L-methionine as donor of the methyl groups. Dimethylation at position 27 of tRNA(Tyr) is required for efficient translation of tyrosine codons. Also required to maintain 3-(3-amino-3-carboxypropyl)uridine (acp3U) in the D-loop of several cytoplasmic tRNAs. This chain is tRNA (guanine(27)-N(2))-dimethyltransferase, found in Rattus norvegicus (Rat).